The following is a 627-amino-acid chain: BEL1-like homeodomain protein 4 (627 aa).

Residues 206–225 form a disordered region; that stretch reads SSQHHHHQVVGHFGSSSSSP. Positions 215–225 are enriched in low complexity; it reads VGHFGSSSSSP. The segment at 241–257 is SR/KY domain; that stretch reads SKYTKPAQELLEEFCSV. The segment at 263–307 is disordered; sequence KKNKLSRNNSNPNTTGGGGGGGSSSSAGTANDSPPLSPADRIEHQ. Positions 302 to 373 are BELL domain; sequence DRIEHQRRKV…CLKDAVAVQL (72 aa). Positions 424–486 form a DNA-binding region, homeobox; that stretch reads AWRPQRGLPE…NARVRLWKPM (63 aa). The segment at 494–530 is disordered; it reads EAKEREEAEEENENQQQQRRQQQTNNNDTKPNNNENN. The segment covering 507 to 530 has biased composition (low complexity); the sequence is NQQQQRRQQQTNNNDTKPNNNENN.

This sequence belongs to the TALE/BELL homeobox family. As to quaternary structure, may form heterodimeric complexes with TALE/KNOX proteins. Interacts with OFP1, OFP2 and OFP5. Interacts with KNATM, isoform KNATM-B. In terms of tissue distribution, expressed in lateral organs.

The protein resides in the nucleus. Transcription factor that establishes leaf shape by repressing growth in specific subdomains of the leaf. Negatively regulates knox homeobox gene KNAT1/BP expression. The sequence is that of BEL1-like homeodomain protein 4 (BLH4) from Arabidopsis thaliana (Mouse-ear cress).